Reading from the N-terminus, the 257-residue chain is Snake venom serine protease CL5 (257 aa).

A signal peptide spans 1–18; sequence MVLIRVLANLLILQLSYA. Positions 19–24 are excised as a propeptide; sequence QRSSEL. The Peptidase S1 domain occupies 25-248; sequence VIGGDECNIN…HLDWIQSIIA (224 aa). 5 cysteine pairs are disulfide-bonded: cysteine 31–cysteine 162, cysteine 49–cysteine 65, cysteine 141–cysteine 209, cysteine 173–cysteine 188, and cysteine 199–cysteine 224. Histidine 64 (charge relay system) is an active-site residue. N-linked (GlcNAc...) asparagine glycosylation is found at asparagine 78 and asparagine 102. Aspartate 109 functions as the Charge relay system in the catalytic mechanism. Asparagine 153 and asparagine 169 each carry an N-linked (GlcNAc...) asparagine glycan. Serine 203 (charge relay system) is an active-site residue. A glycan (N-linked (GlcNAc...) asparagine) is linked at asparagine 250.

It belongs to the peptidase S1 family. Snake venom subfamily. Monomer. In terms of tissue distribution, expressed by the venom gland.

The protein localises to the secreted. Snake venom serine protease that may act in the hemostasis system of the prey. This Trimeresurus stejnegeri (Chinese green tree viper) protein is Snake venom serine protease CL5.